The sequence spans 110 residues: Iron-sulfur cluster assembly protein CyaY (110 aa).

This sequence belongs to the frataxin family.

Involved in iron-sulfur (Fe-S) cluster assembly. May act as a regulator of Fe-S biogenesis. This chain is Iron-sulfur cluster assembly protein CyaY, found in Pseudomonas putida (strain W619).